A 449-amino-acid chain; its full sequence is Bifunctional protein GlmU (449 aa).

The tract at residues 1–230 (MASSKLAVIV…EAELLGVNAR (230 aa)) is pyrophosphorylase. Residues 11–14 (LAAG), Lys-25, Gln-74, 79–80 (GT), 102–104 (YGD), Gly-142, Glu-156, Asn-171, and Asn-228 contribute to the UDP-N-acetyl-alpha-D-glucosamine site. Asp-104 serves as a coordination point for Mg(2+). Residue Asn-228 participates in Mg(2+) binding. The tract at residues 231–251 (SELAVAEALVQARLREAAMDN) is linker. The N-acetyltransferase stretch occupies residues 252-449 (GATLIDPATV…QQAAKKAKKD (198 aa)). Residues Arg-317 and Lys-335 each coordinate UDP-N-acetyl-alpha-D-glucosamine. The Proton acceptor role is filled by His-347. 2 residues coordinate UDP-N-acetyl-alpha-D-glucosamine: Tyr-350 and Asn-361. Acetyl-CoA contacts are provided by residues Ala-364, 370-371 (NY), Ser-389, Ala-407, and Arg-424.

The protein in the N-terminal section; belongs to the N-acetylglucosamine-1-phosphate uridyltransferase family. It in the C-terminal section; belongs to the transferase hexapeptide repeat family. Homotrimer. It depends on Mg(2+) as a cofactor.

The protein localises to the cytoplasm. The catalysed reaction is alpha-D-glucosamine 1-phosphate + acetyl-CoA = N-acetyl-alpha-D-glucosamine 1-phosphate + CoA + H(+). It carries out the reaction N-acetyl-alpha-D-glucosamine 1-phosphate + UTP + H(+) = UDP-N-acetyl-alpha-D-glucosamine + diphosphate. The protein operates within nucleotide-sugar biosynthesis; UDP-N-acetyl-alpha-D-glucosamine biosynthesis; N-acetyl-alpha-D-glucosamine 1-phosphate from alpha-D-glucosamine 6-phosphate (route II): step 2/2. It functions in the pathway nucleotide-sugar biosynthesis; UDP-N-acetyl-alpha-D-glucosamine biosynthesis; UDP-N-acetyl-alpha-D-glucosamine from N-acetyl-alpha-D-glucosamine 1-phosphate: step 1/1. It participates in bacterial outer membrane biogenesis; LPS lipid A biosynthesis. Functionally, catalyzes the last two sequential reactions in the de novo biosynthetic pathway for UDP-N-acetylglucosamine (UDP-GlcNAc). The C-terminal domain catalyzes the transfer of acetyl group from acetyl coenzyme A to glucosamine-1-phosphate (GlcN-1-P) to produce N-acetylglucosamine-1-phosphate (GlcNAc-1-P), which is converted into UDP-GlcNAc by the transfer of uridine 5-monophosphate (from uridine 5-triphosphate), a reaction catalyzed by the N-terminal domain. In Paramagnetospirillum magneticum (strain ATCC 700264 / AMB-1) (Magnetospirillum magneticum), this protein is Bifunctional protein GlmU.